Consider the following 441-residue polypeptide: Vacuolar cation/proton exchanger 2 (441 aa).

The Cytoplasmic segment spans residues 1-69; it reads MSCCKVPVLI…PKNSVLNSIK (69 aa). The chain crosses the membrane as a helical span at residues 70–90; sequence IVIFCNKLNLLLPFGPLAILV. Topologically, residues 91–97 are extracellular; the sequence is HYMIDSK. The helical transmembrane segment at 98–118 threads the bilayer; sequence GWVFLLTLVGITPLAERLGYA. The Cytoplasmic segment spans residues 119-129; that stretch reads TEQLACYTGPT. A helical membrane pass occupies residues 130 to 150; that stretch reads VGGLLNATFGNVTELIISIFA. The interval 139 to 174 is cation selection; the sequence is GNVTELIISIFALKNGMIRVVQLTLLGSILSNMLLV. Topologically, residues 151-166 are extracellular; sequence LKNGMIRVVQLTLLGS. The helical transmembrane segment at 167-187 threads the bilayer; it reads ILSNMLLVLGCAFFCGGLVFY. The Cytoplasmic portion of the chain corresponds to 188–196; the sequence is QKDQVFDKG. A helical transmembrane segment spans residues 197–217; sequence IATVNSGLLLMAVMGILFPAV. The Extracellular portion of the chain corresponds to 218–231; that stretch reads LHYTHSEVHAGSSE. A helical transmembrane segment spans residues 232 to 252; sequence LALSRFSSCIMLIAYAAYLFF. The Cytoplasmic portion of the chain corresponds to 253–286; it reads QLKSQSNSYSPLDEESNQNEETSAEDEDPEISKW. The chain crosses the membrane as a helical span at residues 287-307; it reads EAIIWLSILTAWVSLLSGYLV. The Extracellular segment spans residues 308-311; the sequence is DAIE. The helical transmembrane segment at 312-332 threads the bilayer; sequence GASVSWNIPIAFISTILLPIV. Over 333-354 the chain is Cytoplasmic; that stretch reads GNAAEHAGAIMFAMKDKLDLSL. Residues 333–368 are cation selection; sequence GNAAEHAGAIMFAMKDKLDLSLGVAIGSSIQISMFA. A helical transmembrane segment spans residues 355 to 375; that stretch reads GVAIGSSIQISMFAVPFCVVI. Topologically, residues 376–384 are extracellular; the sequence is GWMMGQQMD. A helical transmembrane segment spans residues 385–405; the sequence is LNFQLFETAMLFITVIVVAFF. Topologically, residues 406-412 are cytoplasmic; sequence LQEGSSN. The chain crosses the membrane as a helical span at residues 413–433; sequence YFKGLMLILCYLIVAASFFVH. Topologically, residues 434–441 are extracellular; that stretch reads EDPHQDGI.

Belongs to the Ca(2+):cation antiporter (CaCA) (TC 2.A.19) family. Cation/proton exchanger (CAX) subfamily.

It localises to the vacuole membrane. With respect to regulation, inhibited by excess of Ca(2+) and Cd(2+), Mn(2+), and Zn(2+). In terms of biological role, vacuolar cation/proton exchanger (CAX). Translocates Ca(2+) and other metal ions into vacuoles using the proton gradient formed by H(+)-ATPase and H(+)-pyrophosphatase. The polypeptide is Vacuolar cation/proton exchanger 2 (CAX2) (Arabidopsis thaliana (Mouse-ear cress)).